The following is a 326-amino-acid chain: Protein FAM50 homolog (326 aa).

Residues 77-111 are disordered; it reads ISNRDLQVARGDQSSSTQSKDSQEAREKEEHVAKH. The segment covering 97 to 109 has biased composition (basic and acidic residues); it reads DSQEAREKEEHVA.

Belongs to the FAM50 family.

This is Protein FAM50 homolog from Caenorhabditis elegans.